The chain runs to 230 residues: Fibronectin type III domain-containing protein 4 (230 aa).

Residues 1–40 (MPGCLPADSVGTMASLMPLSPYLSPTVLLLVSCDLGFVRA) form the signal peptide. Over 41 to 163 (DRPPSPVNVT…GLDGERPLQT (123 aa)) the chain is Extracellular. In terms of domain architecture, Fibronectin type-III spans 43-136 (PPSPVNVTVT…PRVHFRTLKG (94 aa)). Residues Asn48 and Asn143 are each glycosylated (N-linked (GlcNAc...) asparagine). The segment at 118 to 156 (GLRGESPPGPRVHFRTLKGSDRLPSNSSSPGDITVEGLD) is disordered. Residues 164 to 184 (GEVVIIVVVLLMWAAVIGLFC) traverse the membrane as a helical segment. Topologically, residues 185–230 (RQYDIIKDNDSNNNPKEKGKGPEQSPQGRPVGTRQKKSPSINTIDV) are cytoplasmic. Residues 193–205 (NDSNNNPKEKGKG) are compositionally biased toward basic and acidic residues. The disordered stretch occupies residues 193-230 (NDSNNNPKEKGKGPEQSPQGRPVGTRQKKSPSINTIDV).

Its subcellular location is the membrane. It localises to the secreted. Has anti-inflammatory properties. In the colon, acts on macrophages to down-regulate inflammation. May suppress osteoclastogenesis and mature osteoclast resorptive function. In white adipose tissue, decreases local inflammation, via interaction with GPR116. Also required for proper systemic glucose tolerance, specifically sensitizing white adipocytes to insulin and promoting glucose uptake. The insulin sensitizing function in adipose tissue is mediated by interaction with ADGRF5/GPR116 and activation of cAMP signaling. The protein is Fibronectin type III domain-containing protein 4 (FNDC4) of Bos taurus (Bovine).